The primary structure comprises 398 residues: Unsaturated chondroitin disaccharide hydrolase (398 aa).

The Nucleophile role is filled by Asp115. Residues Asp115, Asp175, Gly233, Thr235, Arg247, Trp251, Ser365, and Ser368 each coordinate substrate. Asp175 functions as the Proton donor in the catalytic mechanism.

Belongs to the glycosyl hydrolase 88 family. In terms of assembly, monomer.

It catalyses the reaction beta-D-4-deoxy-Delta(4)-GlcpA-(1-&gt;3)-beta-D-GalpNAc6S + H2O = N-acetyl-beta-D-galactosamine 6-sulfate + 5-dehydro-4-deoxy-D-glucuronate. Functionally, catalyzes the hydrolysis of unsaturated hyaluronate and chondroitin disaccharides. Also degrades unsaturated heparin disaccharides. Releases 4-deoxy-4,5-didehydro D-glucuronic acid or 4-deoxy-4,5-didehydro L-iduronic acid from chondroitin disaccharides, hyaluronan disaccharides and heparin disaccharides and cleaves both glycosidic (1-&gt;3) and (1-&gt;4) bonds. Prefers sulfated glycosaminoglycans compared to unsulfated glycosaminoglycans. Probably required for mammalian cells invasion through the degradation of extracellular sulfated glycosaminoglycans such as chondroitin and hyaluronan. This Streptococcus agalactiae serotype III (strain NEM316) protein is Unsaturated chondroitin disaccharide hydrolase.